The primary structure comprises 81 residues: ATP synthase subunit c, chloroplastic (81 aa).

A run of 2 helical transmembrane segments spans residues 3 to 23 (PLIA…ASIG) and 57 to 77 (LAFM…LLFA).

This sequence belongs to the ATPase C chain family. In terms of assembly, F-type ATPases have 2 components, F(1) - the catalytic core - and F(0) - the membrane proton channel. F(1) has five subunits: alpha(3), beta(3), gamma(1), delta(1), epsilon(1). F(0) has four main subunits: a(1), b(1), b'(1) and c(10-14). The alpha and beta chains form an alternating ring which encloses part of the gamma chain. F(1) is attached to F(0) by a central stalk formed by the gamma and epsilon chains, while a peripheral stalk is formed by the delta, b and b' chains.

The protein localises to the plastid. It localises to the chloroplast thylakoid membrane. F(1)F(0) ATP synthase produces ATP from ADP in the presence of a proton or sodium gradient. F-type ATPases consist of two structural domains, F(1) containing the extramembraneous catalytic core and F(0) containing the membrane proton channel, linked together by a central stalk and a peripheral stalk. During catalysis, ATP synthesis in the catalytic domain of F(1) is coupled via a rotary mechanism of the central stalk subunits to proton translocation. Functionally, key component of the F(0) channel; it plays a direct role in translocation across the membrane. A homomeric c-ring of between 10-14 subunits forms the central stalk rotor element with the F(1) delta and epsilon subunits. This chain is ATP synthase subunit c, chloroplastic, found in Pisum sativum (Garden pea).